Here is a 529-residue protein sequence, read N- to C-terminus: CRISPR-associated endodeoxyribonuclease Cas12f1 (529 aa).

The interval Met1–Trp95 is zinc finger domain (ZF). Zn(2+) contacts are provided by Cys50, His53, Cys69, and Cys72. Positions Gln96 to Ile192 are recognition domain (REC). The segment at Pro193–Lys312 is wedge domain (WED). A linker region spans residues Ile313–Ile321. A ruvC-I region spans residues Ile322–Lys473. Residues Asp326 and Glu422 contribute to the active site. The segment at Thr474–Asn508 is target nucleic acid-binding (TNB). Zn(2+)-binding residues include Cys475 and Cys478. The active site involves Arg490. Positions 500 and 503 each coordinate Zn(2+). The tract at residues Ala509–Pro529 is ruvC-II. The active site involves Asp510.

Belongs to the CRISPR-associated endonuclease Cas12f family. As to quaternary structure, an asymmetric homodimer. Guide RNA is probably required for dimerization. Mg(2+) is required as a cofactor. Zn(2+) serves as cofactor.

Its activity is regulated as follows. Target ssDNA cleavage is inhibited by EDTA. Activity is maximal with 5-50 mM NaCl, is less efficient at higher NaCl concentrations. Its function is as follows. CRISPR (clustered regularly interspaced short palindromic repeat), is an adaptive immune system that provides protection against mobile genetic elements (viruses, transposable elements and conjugative plasmids). CRISPR clusters contain sequences complementary to antecedent mobile elements and target invading nucleic acids. CRISPR clusters are transcribed and processed into CRISPR RNA (crRNA), which requires a trans-encoded small RNA (tracrRNA), but not this protein (in vitro). Upon expression in E.coli of this protein, a mini CRISPR array and the probable tracrRNA, the protein associates with both RNAs. The mini system is not active in E.coli against phiX174 phage, nor is it active in protection against transformation by foreign plasmids. In vitro the purified protein-tracrRNA-crRNA complex cleaves ssDNA complementary to the crRNA; target cleavage requires both tracrRNA and crRNA, but not a protospacer adjacent motif (PAM). The tracrRNA-crRNA can be replaced by a single guide RNA (sgRNA). 2-nucleotide mismatches in the middle of the crRNA:DNA heteroduplex decrease cleavage. Cleavage occurs just downstream of the heteroduplex. Activation of this protein results in non-specific ssDNA degradation in vitro. In vitro and in E.coli (coexpressed with sgRNA) has dsDNA endonuclease activity, recognizing the 5' PAM sequence TTTR; both sgRNA and a PAM are required for activity. Cleaves the target strand 24 and the nontarget strand 22 bases upstream of the PAM (respectively), resulting in 5' overhangs. The 2 monomers interact differently with the sgRNA and target DNA. Mutagenesis of a dimeric construct shows that one of the RuvC monomers probably cleaves both DNA strands. The sequence is that of CRISPR-associated endodeoxyribonuclease Cas12f1 from Uncultured archaeon.